The following is a 125-amino-acid chain: Holo-[acyl-carrier-protein] synthase (125 aa).

Mg(2+) is bound by residues aspartate 8 and glutamate 57.

It belongs to the P-Pant transferase superfamily. AcpS family. Mg(2+) is required as a cofactor.

It localises to the cytoplasm. The enzyme catalyses apo-[ACP] + CoA = holo-[ACP] + adenosine 3',5'-bisphosphate + H(+). In terms of biological role, transfers the 4'-phosphopantetheine moiety from coenzyme A to a Ser of acyl-carrier-protein. The protein is Holo-[acyl-carrier-protein] synthase of Neisseria gonorrhoeae (strain ATCC 700825 / FA 1090).